The primary structure comprises 272 residues: Ribosomal RNA small subunit methyltransferase A (272 aa).

Residues Asn18, Leu20, Gly45, Glu66, Asp91, and Asn113 each coordinate S-adenosyl-L-methionine.

This sequence belongs to the class I-like SAM-binding methyltransferase superfamily. rRNA adenine N(6)-methyltransferase family. RsmA subfamily.

It is found in the cytoplasm. The catalysed reaction is adenosine(1518)/adenosine(1519) in 16S rRNA + 4 S-adenosyl-L-methionine = N(6)-dimethyladenosine(1518)/N(6)-dimethyladenosine(1519) in 16S rRNA + 4 S-adenosyl-L-homocysteine + 4 H(+). Specifically dimethylates two adjacent adenosines (A1518 and A1519) in the loop of a conserved hairpin near the 3'-end of 16S rRNA in the 30S particle. May play a critical role in biogenesis of 30S subunits. This Pectobacterium atrosepticum (strain SCRI 1043 / ATCC BAA-672) (Erwinia carotovora subsp. atroseptica) protein is Ribosomal RNA small subunit methyltransferase A.